Here is a 349-residue protein sequence, read N- to C-terminus: RING-H2 finger protein ATL48 (349 aa).

Residues 1-85 (MSSVEPDMED…DNPWKKLLLS (85 aa)) form the HIG1 domain. The residue at position 2 (serine 2) is an N-acetylserine. Transmembrane regions (helical) follow at residues 21-41 (PLVP…LISF), 55-75 (ARVV…YYYG), and 121-141 (CLVI…YLIF). An RING-type; atypical zinc finger spans residues 207-249 (CAVCLNEFSDTDKLRLLPVCSHAFHLHCIDTWLLSNSTCPLCR).

This sequence belongs to the RING-type zinc finger family. ATL subfamily.

The protein localises to the membrane. The enzyme catalyses S-ubiquitinyl-[E2 ubiquitin-conjugating enzyme]-L-cysteine + [acceptor protein]-L-lysine = [E2 ubiquitin-conjugating enzyme]-L-cysteine + N(6)-ubiquitinyl-[acceptor protein]-L-lysine.. The protein operates within protein modification; protein ubiquitination. The sequence is that of RING-H2 finger protein ATL48 (ATL48) from Arabidopsis thaliana (Mouse-ear cress).